Consider the following 269-residue polypeptide: Pertussis toxin subunit 1 homolog (269 aa).

The signal sequence occupies residues 1 to 34; sequence MRCTRAIRQTARTGWLTWLAILAVTAPVTSPAWA.

It belongs to the bacterial exotoxin subunit A family.

This Bordetella bronchiseptica (strain ATCC BAA-588 / NCTC 13252 / RB50) (Alcaligenes bronchisepticus) protein is Pertussis toxin subunit 1 homolog (ptxA).